The following is a 588-amino-acid chain: Myc box-dependent-interacting protein 1 (588 aa).

The residue at position 2 (A2) is an N-acetylalanine. Residues 2–122 (AEMGSKGVTA…DYHQKLVDQA (121 aa)) form an interaction with BIN2 region. 2 coiled-coil regions span residues 15-42 (ASNV…TKDE) and 193-274 (HLVA…EKQH). The BAR domain occupies 29-276 (VLQKLGKADE…LVSLEKQHGS (248 aa)). The segment at 279–355 (FTVKAQPSDN…PKHTPSKEMK (77 aa)) is disordered. S296, S298, and S304 each carry phosphoserine. T308 is modified (phosphothreonine). 2 positions are modified to phosphoserine: S324 and S332. The interval 379 to 422 (FEAPGPFSEQASLLDLDFEPLPPVASPVKAPTPSGQSIPWDLWE) is clathrin-binding. The tract at residues 448 to 484 (PSQTAEPGPAQPAEASEVVGGAQEPGETAASEATSSS) is disordered. Residues 474 to 484 (ETAASEATSSS) show a composition bias toward low complexity. An SH3 domain is found at 515 to 588 (GFMFKVQAQH…FPENFTERVQ (74 aa)).

As to quaternary structure, heterodimer with AMPH. Binds SH3GLB1. Interacts (via SH3 domain) with DNM1. Interacts with SYNJ1. Interacts (via SH3 domain) with DNM2. Interacts with CLTC. Interacts with AP2A2. Interacts with AP2B1. Interacts with MYC (via N-terminal transactivation domain); the interaction requires the integrity of the conserved MYC box regions 1 and 2. Interacts with BIN2. Interacts with SNX4. Interacts (via BAR domain) with BACE1. Binds (via BAR domain) F-actin. Post-translationally, phosphorylated by protein kinase C. Isoform 1 is expressed mainly in the brain. Isoform 2 is widely expressed.

The protein localises to the nucleus. It is found in the cytoplasm. Its subcellular location is the endosome. It localises to the cell membrane. The protein resides in the sarcolemma. The protein localises to the T-tubule. Functionally, is a key player in the control of plasma membrane curvature, and membrane shaping and remodeling. Required in muscle cells for the formation of T-tubules, tubular invaginations of the plasma membrane that function in depolarization-contraction coupling. Required in muscle cells for the formation of T-tubules, tubular invaginations of the plasma membrane that function in depolarization-contraction coupling. Is a negative regulator of endocytosis. Is also involved in the regulation of intracellular vesicles sorting, modulation of BACE1 trafficking and the control of amyloid-beta production. In neuronal circuits, endocytosis regulation may influence the internalization of PHF-tau aggregates. May be involved in the regulation of MYC activity and the control cell proliferation. The sequence is that of Myc box-dependent-interacting protein 1 (Bin1) from Mus musculus (Mouse).